Consider the following 1064-residue polypeptide: Error-prone DNA polymerase (1064 aa).

Belongs to the DNA polymerase type-C family. DnaE2 subfamily.

It is found in the cytoplasm. The catalysed reaction is DNA(n) + a 2'-deoxyribonucleoside 5'-triphosphate = DNA(n+1) + diphosphate. Its function is as follows. DNA polymerase involved in damage-induced mutagenesis and translesion synthesis (TLS). It is not the major replicative DNA polymerase. This Azoarcus sp. (strain BH72) protein is Error-prone DNA polymerase.